The sequence spans 107 residues: Putative pterin-4-alpha-carbinolamine dehydratase (107 aa).

It belongs to the pterin-4-alpha-carbinolamine dehydratase family.

It catalyses the reaction (4aS,6R)-4a-hydroxy-L-erythro-5,6,7,8-tetrahydrobiopterin = (6R)-L-erythro-6,7-dihydrobiopterin + H2O. The chain is Putative pterin-4-alpha-carbinolamine dehydratase from Rubrobacter xylanophilus (strain DSM 9941 / JCM 11954 / NBRC 16129 / PRD-1).